The chain runs to 358 residues: Trace amine-associated receptor 7e (358 aa).

Over 1–47 (MATGDDSFLWDQDSILSRDLFSATSAELCYENLNRSCVRSPYSPGPR) the chain is Extracellular. N34 is a glycosylation site (N-linked (GlcNAc...) asparagine). Disulfide bonds link C37-C201 and C120-C205. The helical transmembrane segment at 48-68 (LILYAVFGFGAVLAVCGNLLV) threads the bilayer. Residues 69 to 83 (MTSILHFRQLHSPAN) lie on the Cytoplasmic side of the membrane. The chain crosses the membrane as a helical span at residues 84–104 (FLVASLACADFLVGLTVMPFS). The Extracellular portion of the chain corresponds to 105–121 (TVRSVEGCWYFGEIYCK). A helical membrane pass occupies residues 122–143 (LHTCFDVSFCSSSIFHLCFISV). Topologically, residues 144 to 166 (DRYIAVSDPLIYPTRFTASVSNK) are cytoplasmic. A helical membrane pass occupies residues 167–187 (CITFSWLLSISYGFSLIYTGA). The Extracellular portion of the chain corresponds to 188 to 212 (SEAGLEDLVSALTCVGGCQLAVNQS). An N-linked (GlcNAc...) asparagine glycan is attached at N210. A helical membrane pass occupies residues 213–233 (WVFINFLLFLIPTLVMITVYS). The Cytoplasmic segment spans residues 234–274 (KIFLIAKQQAQNIEKMSKQTARASDSYKDRVAKRERKAAKT). A helical membrane pass occupies residues 275–295 (LGIAVAAFLLSWLPYFIDSFI). At 296 to 309 (DAFLGFITPTYVYE) the chain is on the extracellular side. Residues 310 to 333 (ILVWIAYYNSAMNPLIYAFFYPWF) traverse the membrane as a helical segment. Residues 334–358 (RKAIKLTVTGKILRENSSTTNLFPE) are Cytoplasmic-facing.

Belongs to the G-protein coupled receptor 1 family. As to expression, specifically expressed in neurons of the olfactory epithelium.

The protein resides in the cell membrane. Functionally, olfactory receptor specific for N,N-dimethylalkylamines trace amines. Trace amine compounds are enriched in animal body fluids and act on trace amine-associated receptors (TAARs) to elicit both intraspecific and interspecific innate behaviors. Ligand-binding causes a conformation change that triggers signaling via G(s)-class of G alpha proteins (GNAL or GNAS). In Mus musculus (Mouse), this protein is Trace amine-associated receptor 7e.